Here is a 152-residue protein sequence, read N- to C-terminus: SsrA-binding protein (152 aa).

The protein belongs to the SmpB family.

The protein resides in the cytoplasm. Its function is as follows. Required for rescue of stalled ribosomes mediated by trans-translation. Binds to transfer-messenger RNA (tmRNA), required for stable association of tmRNA with ribosomes. tmRNA and SmpB together mimic tRNA shape, replacing the anticodon stem-loop with SmpB. tmRNA is encoded by the ssrA gene; the 2 termini fold to resemble tRNA(Ala) and it encodes a 'tag peptide', a short internal open reading frame. During trans-translation Ala-aminoacylated tmRNA acts like a tRNA, entering the A-site of stalled ribosomes, displacing the stalled mRNA. The ribosome then switches to translate the ORF on the tmRNA; the nascent peptide is terminated with the 'tag peptide' encoded by the tmRNA and targeted for degradation. The ribosome is freed to recommence translation, which seems to be the essential function of trans-translation. The protein is SsrA-binding protein of Rickettsia bellii (strain RML369-C).